A 112-amino-acid chain; its full sequence is Large ribosomal subunit protein mL53 (112 aa).

Belongs to the mitochondrion-specific ribosomal protein mL53 family. In terms of assembly, component of the mitochondrial large ribosomal subunit (mt-LSU). Mature mammalian 55S mitochondrial ribosomes consist of a small (28S) and a large (39S) subunit. The 28S small subunit contains a 12S ribosomal RNA (12S mt-rRNA) and 30 different proteins. The 39S large subunit contains a 16S rRNA (16S mt-rRNA), a copy of mitochondrial valine transfer RNA (mt-tRNA(Val)), which plays an integral structural role, and 52 different proteins. mL53 is located at the L7/L12 stalk.

It localises to the mitochondrion. This Homo sapiens (Human) protein is Large ribosomal subunit protein mL53 (MRPL53).